The sequence spans 933 residues: Dual 3',5'-cyclic-AMP and -GMP phosphodiesterase 11A (933 aa).

Residues 42 to 125 form a disordered region; it reads HSQGQGALGP…ASQKELRKSF (84 aa). 3 positions are modified to phosphoserine: Ser162, Ser163, and Ser239. GAF domains are found at residues 217–370 and 402–558; these read DLTS…GIAI and DLEK…GLGI. Ser424 contributes to the 3',5'-cyclic GMP binding site. In terms of domain architecture, PDEase spans 588 to 912; the sequence is SKAEVDKFKA…SKWEELHQKR (325 aa). The Proton donor role is filled by His664. Positions 668, 704, 705, and 816 each coordinate a divalent metal cation.

This sequence belongs to the cyclic nucleotide phosphodiesterase family. The cofactor is a divalent metal cation. In terms of tissue distribution, isoform 1 is present in prostate, pituitary, heart and liver. It is however not present in testis nor in penis, suggesting that weak inhibition by Tadalafil (Cialis) is not relevant (at protein level). Isoform 2 may be expressed in testis. Isoform 4 is expressed in adrenal cortex.

The protein localises to the cytoplasm. Its subcellular location is the cytosol. It carries out the reaction 3',5'-cyclic GMP + H2O = GMP + H(+). The enzyme catalyses 3',5'-cyclic AMP + H2O = AMP + H(+). Inhibited by 3-isobutyl-1-methylxanthine (IBMX), zaprinast and dipyridamole. cGMP acts as an allosteric activator. Weakly inhibited by Sildenafil (Viagra) and Tadalafil (Cialis); however, the fact that the protein is probably absent from testis, suggests that it is not biologically relevant and is not related with erectile dysfunction. In terms of biological role, plays a role in signal transduction by regulating the intracellular concentration of cyclic nucleotides cAMP and cGMP. Catalyzes the hydrolysis of both cAMP and cGMP to 5'-AMP and 5'-GMP, respectively. This chain is Dual 3',5'-cyclic-AMP and -GMP phosphodiesterase 11A, found in Homo sapiens (Human).